Here is a 132-residue protein sequence, read N- to C-terminus: Fatty acid-binding protein 1 (132 aa).

Residues R106 and 128–130 contribute to the a fatty acid site; that span reads RYY.

This sequence belongs to the calycin superfamily. Fatty-acid binding protein (FABP) family. Monomer. As to expression, midgut.

The protein localises to the cytoplasm. Its function is as follows. Binds fatty acids in a 1:1 molar ratio. The polypeptide is Fatty acid-binding protein 1 (MFB1) (Manduca sexta (Tobacco hawkmoth)).